The chain runs to 253 residues: Phycocyanobilin:ferredoxin oxidoreductase (253 aa).

Belongs to the HY2 family.

The catalysed reaction is (2R,3Z)-phycocyanobilin + 4 oxidized [2Fe-2S]-[ferredoxin] = biliverdin IXalpha + 4 reduced [2Fe-2S]-[ferredoxin] + 4 H(+). Its function is as follows. Catalyzes the four-electron reduction of biliverdin IX-alpha (2-electron reduction at both the A and D rings); the reaction proceeds via an isolatable 2-electron intermediate, 181,182-dihydrobiliverdin. The sequence is that of Phycocyanobilin:ferredoxin oxidoreductase (pcyA) from Gloeobacter violaceus (strain ATCC 29082 / PCC 7421).